Consider the following 829-residue polypeptide: Probable beta-glucosidase H (829 aa).

Asn-13 is a glycosylation site (N-linked (GlcNAc...) asparagine). The active site involves Asp-225. Residues Asn-304, Asn-473, Asn-602, Asn-627, and Asn-664 are each glycosylated (N-linked (GlcNAc...) asparagine). Residues 389–548 (RMLSNAVIHF…DPEQMVANAV (160 aa)) form the PA14 domain.

This sequence belongs to the glycosyl hydrolase 3 family.

It is found in the secreted. The catalysed reaction is Hydrolysis of terminal, non-reducing beta-D-glucosyl residues with release of beta-D-glucose.. Its pathway is glycan metabolism; cellulose degradation. Functionally, beta-glucosidases are one of a number of cellulolytic enzymes involved in the degradation of cellulosic biomass. Catalyzes the last step releasing glucose from the inhibitory cellobiose. The protein is Probable beta-glucosidase H (bglH) of Aspergillus fumigatus (strain ATCC MYA-4609 / CBS 101355 / FGSC A1100 / Af293) (Neosartorya fumigata).